The following is a 651-amino-acid chain: Threonine--tRNA ligase (651 aa).

The 61-residue stretch at 1 to 61 (MPTIQLPDGS…DKDVSLRIIT (61 aa)) folds into the TGS domain. A catalytic region spans residues 242-533 (DHRLLAKKMD…LLEESAGKLP (292 aa)). 3 residues coordinate Zn(2+): C333, H384, and H510. Residues 631–651 (ISQRSRKSPAPSPLFPVGGES) form a disordered region.

It belongs to the class-II aminoacyl-tRNA synthetase family. As to quaternary structure, homodimer. Requires Zn(2+) as cofactor.

It is found in the cytoplasm. The enzyme catalyses tRNA(Thr) + L-threonine + ATP = L-threonyl-tRNA(Thr) + AMP + diphosphate + H(+). Its function is as follows. Catalyzes the attachment of threonine to tRNA(Thr) in a two-step reaction: L-threonine is first activated by ATP to form Thr-AMP and then transferred to the acceptor end of tRNA(Thr). Also edits incorrectly charged L-seryl-tRNA(Thr). This Coxiella burnetii (strain RSA 493 / Nine Mile phase I) protein is Threonine--tRNA ligase.